A 431-amino-acid chain; its full sequence is MCNNNNTSCVNISSMLQPEDIFSRRCIWVNGPVIVGAGPSGLAVAADLKRQEVPFVILERANCIASLWQNRTYDRLKLHLPKQFCQLPNLPFPEDIPEYPTKYQFIEYLESYATHFDLRPKFNETVQSAKYDKRFGLWRVQTVLRSELLGYCEFEYICRWLVVATGENAEKVVPEFEGLEDFGGDVLHAGDYKSGERYRGKRVLVVGCGNSGMEVSLDLCNHDASPSMVVRSSVHVLPREVLGKSTFELSVTMMKWMPVWLVDKTLLVLTRLLLGNTDKYGLKRPEIGPLELKNTAGKTPVLDIGAISMIKSGKIKIVAGIAKFGPGKVELVDGRVLQIDSVILATGYRSNVPSWLKENDLGEIGIEKNPFPKGWKGKAGLYAVGFTGRGLSGASFDAMSVAHDIANSWKEETKQQIKTVATRHRRCISHF.

36-41 (GAGPSG) is an FAD binding site. 207-212 (GCGNSG) contributes to the NADP(+) binding site.

Belongs to the FMO family. FAD is required as a cofactor. Expressed in shoot apex regions and siliques, and at high levels in roots. Detected in flowers, stems and leaves.

The enzyme catalyses indole-3-pyruvate + NADPH + O2 + H(+) = (indol-3-yl)acetate + CO2 + NADP(+) + H2O. The protein operates within plant hormone metabolism; auxin biosynthesis. Involved in auxin biosynthesis. Belongs to the set of redundant YUCCA genes probably responsible for auxin biosynthesis in roots. The polypeptide is Probable indole-3-pyruvate monooxygenase YUCCA7 (YUC7) (Arabidopsis thaliana (Mouse-ear cress)).